Reading from the N-terminus, the 483-residue chain is General transcription factor IIH subunit 4 (483 aa).

Residues 93 to 117 (PQQQQSSQQSSSQQQQQQQQQQQQT) are disordered. A compositionally biased stretch (low complexity) spans 94–116 (QQQQSSQQSSSQQQQQQQQQQQQ).

Belongs to the TFB2 family. Component of the 7-subunit TFIIH core complex composed of XPB/repB, XPD/repD, gtf2h1, gtf2h2, gtf2h3, gtf2h4 and gtf2h5, which is active in NER. The core complex associates with the 3-subunit CDK-activating kinase (CAK) module composed of cycH/cyclin H, cdk7 and mnat1 to form the 10-subunit holoenzyme (holo-TFIIH) active in transcription.

It localises to the nucleus. In terms of biological role, component of the general transcription and DNA repair factor IIH (TFIIH) core complex, which is involved in general and transcription-coupled nucleotide excision repair (NER) of damaged DNA and, when complexed to CAK, in RNA transcription by RNA polymerase II. In NER, TFIIH acts by opening DNA around the lesion to allow the excision of the damaged oligonucleotide and its replacement by a new DNA fragment. In transcription, TFIIH has an essential role in transcription initiation. When the pre-initiation complex (PIC) has been established, TFIIH is required for promoter opening and promoter escape. Phosphorylation of the C-terminal tail (CTD) of the largest subunit of RNA polymerase II by the kinase module CAK controls the initiation of transcription. The protein is General transcription factor IIH subunit 4 (gtf2h4) of Dictyostelium discoideum (Social amoeba).